Consider the following 267-residue polypeptide: Thiamine thiazole synthase (267 aa).

NAD(+) is bound by residues serine 41, 60-61 (ER), glycine 68, valine 132, and 160-162 (HVD). Fe cation contacts are provided by aspartate 162 and histidine 177. Methionine 227 is an NAD(+) binding site. A glycine-binding site is contributed by arginine 237.

It belongs to the THI4 family. As to quaternary structure, homooctamer; tetramer of dimers. Fe(2+) is required as a cofactor.

The catalysed reaction is hydrogen sulfide + glycine + NAD(+) = ADP-5-ethyl-4-methylthiazole-2-carboxylate + nicotinamide + 3 H2O + H(+). It functions in the pathway cofactor biosynthesis; thiamine diphosphate biosynthesis. Functionally, involved in the biosynthesis of the thiazole moiety of thiamine. Catalyzes the conversion of NAD and glycine to adenosine diphosphate 5-(2-hydroxyethyl)-4-methylthiazole-2-carboxylate (ADT), an adenylated thiazole intermediate, using free sulfide as a source of sulfur. The sequence is that of Thiamine thiazole synthase from Saccharolobus islandicus (strain M.14.25 / Kamchatka #1) (Sulfolobus islandicus).